We begin with the raw amino-acid sequence, 318 residues long: Acetyl-coenzyme A carboxylase carboxyl transferase subunit alpha (318 aa).

The region spanning 39–292 is the CoA carboxyltransferase C-terminal domain; it reads LTDKSEKQLR…GDSIAAELPD (254 aa).

This sequence belongs to the AccA family. Acetyl-CoA carboxylase is a heterohexamer composed of biotin carboxyl carrier protein (AccB), biotin carboxylase (AccC) and two subunits each of ACCase subunit alpha (AccA) and ACCase subunit beta (AccD).

The protein resides in the cytoplasm. It catalyses the reaction N(6)-carboxybiotinyl-L-lysyl-[protein] + acetyl-CoA = N(6)-biotinyl-L-lysyl-[protein] + malonyl-CoA. It functions in the pathway lipid metabolism; malonyl-CoA biosynthesis; malonyl-CoA from acetyl-CoA: step 1/1. Functionally, component of the acetyl coenzyme A carboxylase (ACC) complex. First, biotin carboxylase catalyzes the carboxylation of biotin on its carrier protein (BCCP) and then the CO(2) group is transferred by the carboxyltransferase to acetyl-CoA to form malonyl-CoA. The protein is Acetyl-coenzyme A carboxylase carboxyl transferase subunit alpha of Gluconacetobacter diazotrophicus (strain ATCC 49037 / DSM 5601 / CCUG 37298 / CIP 103539 / LMG 7603 / PAl5).